The following is a 426-amino-acid chain: Homeobox protein knotted-1-like LET12 (426 aa).

Disordered stretches follow at residues 1–26, 85–158, and 270–290; these read MEFQ…QQNA, QTSN…ENSW, and GVAP…DQAD. Residues 15 to 24 are compositionally biased toward low complexity; the sequence is QQQQQQQQQQ. The span at 104–114 shows a compositional bias: gly residues; the sequence is AGGGSNGGGSG. A compositionally biased stretch (low complexity) spans 139-151; sequence ENNNNNNNNNNNN. One can recognise an ELK domain in the interval 327–347; that stretch reads ELKHELKQGYKEKIVDIREEI. Residues 348–411 constitute a DNA-binding region (homeobox; TALE-type); the sequence is LRKRRAGKLP…NQRKRNWHSN (64 aa). Residues 406–426 form a disordered region; that stretch reads RNWHSNPSTSSSQKSQTQECR. The segment covering 413–426 has biased composition (low complexity); sequence STSSSQKSQTQECR.

It belongs to the TALE/KNOX homeobox family. In terms of tissue distribution, ubiquitously expressed in the mature plant.

Its subcellular location is the nucleus. In terms of biological role, may have a role to play in formative events in ovule and embryo morphogenesis. The sequence is that of Homeobox protein knotted-1-like LET12 (LET12) from Solanum lycopersicum (Tomato).